The sequence spans 160 residues: Small ribosomal subunit protein uS9 (160 aa).

It belongs to the universal ribosomal protein uS9 family.

This chain is Small ribosomal subunit protein uS9, found in Rhodopseudomonas palustris (strain ATCC BAA-98 / CGA009).